Consider the following 305-residue polypeptide: tRNA dimethylallyltransferase (305 aa).

11 to 18 (GPTAVGKT) provides a ligand contact to ATP. 13 to 18 (TAVGKT) is a substrate binding site. An interaction with substrate tRNA region spans residues 36–39 (DSMQ).

The protein belongs to the IPP transferase family. As to quaternary structure, monomer. The cofactor is Mg(2+).

It carries out the reaction adenosine(37) in tRNA + dimethylallyl diphosphate = N(6)-dimethylallyladenosine(37) in tRNA + diphosphate. Its function is as follows. Catalyzes the transfer of a dimethylallyl group onto the adenine at position 37 in tRNAs that read codons beginning with uridine, leading to the formation of N6-(dimethylallyl)adenosine (i(6)A). The polypeptide is tRNA dimethylallyltransferase (Listeria innocua serovar 6a (strain ATCC BAA-680 / CLIP 11262)).